Reading from the N-terminus, the 284-residue chain is 4-diphosphocytidyl-2-C-methyl-D-erythritol kinase (284 aa).

The active site involves Lys14. 98 to 108 serves as a coordination point for ATP; sequence PMGGGLGGGSS. Asp140 is a catalytic residue.

The protein belongs to the GHMP kinase family. IspE subfamily.

The catalysed reaction is 4-CDP-2-C-methyl-D-erythritol + ATP = 4-CDP-2-C-methyl-D-erythritol 2-phosphate + ADP + H(+). The protein operates within isoprenoid biosynthesis; isopentenyl diphosphate biosynthesis via DXP pathway; isopentenyl diphosphate from 1-deoxy-D-xylulose 5-phosphate: step 3/6. Functionally, catalyzes the phosphorylation of the position 2 hydroxy group of 4-diphosphocytidyl-2C-methyl-D-erythritol. This chain is 4-diphosphocytidyl-2-C-methyl-D-erythritol kinase, found in Shewanella baltica (strain OS195).